The following is a 304-amino-acid chain: Bifunctional phosphoglucose/phosphomannose isomerase (304 aa).

The region spanning 16–147 is the SIS domain; that stretch reads FDKSFKVGKY…KPKIGDVDEA (132 aa). 6 residues coordinate D-fructose 6-phosphate: Gly35, Ser36, Ser74, Ser76, Thr79, and Arg122. Catalysis depends on Glu196, which acts as the Proton acceptor. Positions 212 and 300 each coordinate D-fructose 6-phosphate. The active-site Proton donor is the His212. The active-site Proton acceptor is Lys300.

Belongs to the PGI/PMI family. As to quaternary structure, homodimer.

The catalysed reaction is alpha-D-glucose 6-phosphate = beta-D-fructose 6-phosphate. It catalyses the reaction D-mannose 6-phosphate = D-fructose 6-phosphate. Its function is as follows. Dual specificity isomerase that catalyzes the isomerization of both glucose-6-phosphate and mannose-6-phosphate to fructose-6-phosphate. The sequence is that of Bifunctional phosphoglucose/phosphomannose isomerase from Thermoplasma volcanium (strain ATCC 51530 / DSM 4299 / JCM 9571 / NBRC 15438 / GSS1).